Reading from the N-terminus, the 1162-residue chain is Carbamoyl phosphate synthase large chain (1162 aa).

The carboxyphosphate synthetic domain stretch occupies residues 1-456 (MPKRTDIKSI…SLQKALRGLE (456 aa)). 12 residues coordinate ATP: R129, R222, G228, G229, E261, V263, E268, G294, V295, H296, Q338, and E352. The ATP-grasp 1 domain maps to 186–381 (ETEWQLGEVE…IAKVAAKLAV (196 aa)). Mg(2+)-binding residues include Q338, E352, and N354. The Mn(2+) site is built by Q338, E352, and N354. An oligomerization domain region spans residues 457-613 (TGLTGFDEIA…PFVGQPRSEA (157 aa)). Positions 614 to 1025 (EVSDRKKVVI…AFAKAQLGAG (412 aa)) are carbamoyl phosphate synthetic domain. One can recognise an ATP-grasp 2 domain in the interval 742–954 (QKLLIKLDLN…IAKVAARIMA (213 aa)). R778, T838, L840, E845, G870, I871, H872, S873, Q913, and E925 together coordinate ATP. Mg(2+) contacts are provided by Q913, E925, and N927. Positions 913, 925, and 927 each coordinate Mn(2+). Residues 1026-1162 (VELPREGTVF…VRPLQDYFRS (137 aa)) form the MGS-like domain. The allosteric domain stretch occupies residues 1026-1162 (VELPREGTVF…VRPLQDYFRS (137 aa)).

This sequence belongs to the CarB family. In terms of assembly, composed of two chains; the small (or glutamine) chain promotes the hydrolysis of glutamine to ammonia, which is used by the large (or ammonia) chain to synthesize carbamoyl phosphate. Tetramer of heterodimers (alpha,beta)4. Mg(2+) serves as cofactor. Requires Mn(2+) as cofactor.

The enzyme catalyses hydrogencarbonate + L-glutamine + 2 ATP + H2O = carbamoyl phosphate + L-glutamate + 2 ADP + phosphate + 2 H(+). The catalysed reaction is hydrogencarbonate + NH4(+) + 2 ATP = carbamoyl phosphate + 2 ADP + phosphate + 2 H(+). Its pathway is amino-acid biosynthesis; L-arginine biosynthesis; carbamoyl phosphate from bicarbonate: step 1/1. The protein operates within pyrimidine metabolism; UMP biosynthesis via de novo pathway; (S)-dihydroorotate from bicarbonate: step 1/3. Large subunit of the glutamine-dependent carbamoyl phosphate synthetase (CPSase). CPSase catalyzes the formation of carbamoyl phosphate from the ammonia moiety of glutamine, carbonate, and phosphate donated by ATP, constituting the first step of 2 biosynthetic pathways, one leading to arginine and/or urea and the other to pyrimidine nucleotides. The large subunit (synthetase) binds the substrates ammonia (free or transferred from glutamine from the small subunit), hydrogencarbonate and ATP and carries out an ATP-coupled ligase reaction, activating hydrogencarbonate by forming carboxy phosphate which reacts with ammonia to form carbamoyl phosphate. The protein is Carbamoyl phosphate synthase large chain of Brucella melitensis biotype 1 (strain ATCC 23456 / CCUG 17765 / NCTC 10094 / 16M).